Reading from the N-terminus, the 83-residue chain is Large ribosomal subunit protein bL31B (83 aa).

It belongs to the bacterial ribosomal protein bL31 family. Type B subfamily. Part of the 50S ribosomal subunit.

This is Large ribosomal subunit protein bL31B from Lactobacillus johnsonii (strain CNCM I-12250 / La1 / NCC 533).